The sequence spans 776 residues: Intermediate filament protein ifp-1 (776 aa).

Positions 1 to 23 (MDSANARDCLLHLARAKLSERQD) are head. The 352-residue stretch at 20-371 (ERQDLVQLND…ELLDRSGDPR (352 aa)) folds into the IF rod domain. A coil 1A region spans residues 24 to 55 (LVQLNDQFVDIIEHVHYMEAEHTALEHDYNLL). The segment at 56 to 69 (KSGVQSDSSGINEI) is linker 1. Residues 70–207 (YNVEIRTVRS…EDNKKIIMNE (138 aa)) are coil 1B. The tract at residues 208–224 (HKYFVRDRNADRHVFRD) is linker 12. The coil 2 stretch occupies residues 225–620 (QLRKAIADIR…QRGPHHSSYH (396 aa)). Disordered regions lie at residues 453-473 (ASPI…DSRS) and 518-544 (NTTQ…SERR). The span at 518–536 (NTTQINNPYASRTPTSSVN) shows a compositional bias: polar residues. Residues 621-768 (AATGSVSNSI…WFVYTSNTEI (148 aa)) form a tail region. The LTD domain maps to 653–764 (NFQRFTRWYK…EVKSWFVYTS (112 aa)).

Belongs to the intermediate filament family.

Its subcellular location is the cytoplasm. In terms of biological role, cytoplasmic intermediate filaments provide mechanical strength to cells. Not essential protein. The sequence is that of Intermediate filament protein ifp-1 (ifp-1) from Caenorhabditis elegans.